Reading from the N-terminus, the 364-residue chain is Aminomethyltransferase (364 aa).

The protein belongs to the GcvT family. The glycine cleavage system is composed of four proteins: P, T, L and H.

The enzyme catalyses N(6)-[(R)-S(8)-aminomethyldihydrolipoyl]-L-lysyl-[protein] + (6S)-5,6,7,8-tetrahydrofolate = N(6)-[(R)-dihydrolipoyl]-L-lysyl-[protein] + (6R)-5,10-methylene-5,6,7,8-tetrahydrofolate + NH4(+). Functionally, the glycine cleavage system catalyzes the degradation of glycine. The protein is Aminomethyltransferase of Shigella sonnei (strain Ss046).